A 1379-amino-acid chain; its full sequence is Protein three rows (1379 aa).

A separase cleavage-site region spans residues 1031–1037 (VEPIRKQ). Disordered stretches follow at residues 1206–1231 (PEDK…KQSA), 1248–1309 (PSAT…ATSK), and 1328–1379 (ITTS…RHRH). Over residues 1213-1228 (ATGSVSAVKNTASKVK) the composition is skewed to polar residues. Positions 1248–1267 (PSATSCSSSGGSGTENTPPS) are enriched in low complexity.

In terms of assembly, interacts with pim and Sse. Cleavage of thr contributes to inactivation of Sse. Proteolytically cleaved after the metaphase-to-anaphase transition, C-terminal cleavage product is degraded. Cleavage can only proceed within complexes that contain active Sse. As to expression, during embryogenesis, expressed in Malpighian tubule buds, and epithelia of foregut and hindgut.

It is found in the cytoplasm. Functionally, required specifically for chromosome disjunction during all mitoses; maternally provided protein is sufficient until mitosis 14 then zygotic protein is required. Involved in formation and/or maintenance of epithelial structures: bud extension during Malpighian tubule development, and foregut and hindgut morphogenesis. This Drosophila melanogaster (Fruit fly) protein is Protein three rows (thr).